The chain runs to 138 residues: MALKKLRFEDILLGLTLSLTFLYPLIITLIILYQDAKRKEKEMKIFQKVENIFLSKRCRERILEIVPYLEFVSDSFIEKLIKVCEFTSGKKPKDKEYKNLEEESLYLIELERGTLKVLGKWISDEEFKLLLITYEPKT.

A helical transmembrane segment spans residues 11 to 33; it reads ILLGLTLSLTFLYPLIITLIILY.

Its subcellular location is the membrane. This is an uncharacterized protein from Aquifex aeolicus (strain VF5).